We begin with the raw amino-acid sequence, 63 residues long: Anaphase-promoting complex subunit 13 (63 aa).

The interval 36–63 (KTDDTEETNQETQQADAETWRDLALDTQ) is disordered. Basic and acidic residues predominate over residues 53 to 63 (ETWRDLALDTQ).

This sequence belongs to the APC13 family. As to quaternary structure, component of the anaphase promoting complex/cyclosome (APC/C) complex. As to expression, expressed constitutively in roots, leaves, stems, buds, flowers, and seeds.

The protein resides in the nucleus. It participates in protein modification; protein ubiquitination. Component of the anaphase promoting complex/cyclosome (APC/C), a cell cycle-regulated E3 ubiquitin ligase that controls progression through mitosis and the G1 phase of the cell cycle. The APC/C complex acts by mediating ubiquitination and subsequent degradation of target proteins. Regulates global growth and development, including phyllotaxis and apical dominance. Required for pollen maturation. Promotes (pri) miRNA transcription of each MIR159 genes. In Arabidopsis thaliana (Mouse-ear cress), this protein is Anaphase-promoting complex subunit 13.